Here is a 573-residue protein sequence, read N- to C-terminus: Ribonuclease J (573 aa).

A disordered region spans residues 1 to 29 (MENQERKPRRRRRRRPQEGSQGGPQDHVE). His93, His95, Asp97, His98, His168, and Asp190 together coordinate Zn(2+). Residues 259–261 (ASH) and 390–394 (HASGH) contribute to the substrate site. His416 contributes to the Zn(2+) binding site.

Belongs to the metallo-beta-lactamase superfamily. RNA-metabolizing metallo-beta-lactamase-like family. Bacterial RNase J subfamily. Homodimer. May be a subunit of the RNA degradosome. Requires Zn(2+) as cofactor.

It localises to the cytoplasm. Its function is as follows. An RNase that has endonuclease and possibly 5'-3' exonuclease activity. Probably involved in maturation of rRNA and in some organisms also mRNA maturation and/or decay. The polypeptide is Ribonuclease J (Thermus thermophilus (strain ATCC BAA-163 / DSM 7039 / HB27)).